The sequence spans 165 residues: Small ribosomal subunit protein uS17m (165 aa).

This sequence belongs to the universal ribosomal protein uS17 family. In terms of assembly, component of the mitochondrial small ribosomal subunit (mt-SSU). Mature N.crassa 74S mitochondrial ribosomes consist of a small (37S) and a large (54S) subunit. The 37S small subunit contains a 16S ribosomal RNA (16S mt-rRNA) and 32 different proteins. The 54S large subunit contains a 23S rRNA (23S mt-rRNA) and 42 different proteins. uS17m interacts with the F(1)-ATPase inhibitor IF(1) dimer.

The protein resides in the mitochondrion. Component of the mitochondrial ribosome (mitoribosome), a dedicated translation machinery responsible for the synthesis of mitochondrial genome-encoded proteins, including at least some of the essential transmembrane subunits of the mitochondrial respiratory chain. The mitoribosomes are attached to the mitochondrial inner membrane and translation products are cotranslationally integrated into the membrane. The protein is Small ribosomal subunit protein uS17m (mrps17) of Neurospora crassa (strain ATCC 24698 / 74-OR23-1A / CBS 708.71 / DSM 1257 / FGSC 987).